The sequence spans 1231 residues: ATP-dependent RNA helicase DHX30 (1231 aa).

The tract at residues proline 39–alanine 65 is disordered. DRBM domains are found at residues proline 80 to phenylalanine 148 and proline 292 to leucine 359. The Helicase ATP-binding domain occupies leucine 488–proline 656. Residue glycine 501 to threonine 508 participates in ATP binding. The DEAH box signature appears at aspartate 603–histidine 606. A Helicase C-terminal domain is found at leucine 697–methionine 870.

It belongs to the DEAD box helicase family. DEAH subfamily.

It localises to the cytoplasm. Its subcellular location is the mitochondrion. The protein localises to the mitochondrion matrix. The protein resides in the mitochondrion nucleoid. The enzyme catalyses ATP + H2O = ADP + phosphate + H(+). In terms of biological role, RNA-dependent helicase. Plays an important role in the assembly of the mitochondrial large ribosomal subunit. Required for optimal function of the zinc-finger antiviral protein ZC3HAV1. Associates with mitochondrial DNA. Involved in nervous system development and differentiation through its involvement in the up-regulation of a number of genes which are required for neurogenesis, including GSC, NCAM1, neurogenin, and NEUROD. This is ATP-dependent RNA helicase DHX30 (DHX30) from Gallus gallus (Chicken).